Consider the following 397-residue polypeptide: Acetate kinase (397 aa).

Asparagine 8 provides a ligand contact to Mg(2+). An ATP-binding site is contributed by lysine 15. Residue arginine 90 participates in substrate binding. Catalysis depends on aspartate 147, which acts as the Proton donor/acceptor. ATP contacts are provided by residues 207 to 211 (HLGAG), 283 to 285 (DMR), and 330 to 334 (GVGEN). Residue glutamate 383 participates in Mg(2+) binding.

It belongs to the acetokinase family. As to quaternary structure, homodimer. Requires Mg(2+) as cofactor. The cofactor is Mn(2+).

It is found in the cytoplasm. It carries out the reaction acetate + ATP = acetyl phosphate + ADP. Its pathway is metabolic intermediate biosynthesis; acetyl-CoA biosynthesis; acetyl-CoA from acetate: step 1/2. In terms of biological role, catalyzes the formation of acetyl phosphate from acetate and ATP. Can also catalyze the reverse reaction. The chain is Acetate kinase from Fructilactobacillus sanfranciscensis (Lactobacillus sanfranciscensis).